We begin with the raw amino-acid sequence, 4351 residues long: Protocadherin Fat 2 (4351 aa).

The first 18 residues, 1–18 (MTLVLLGVAMVLLHRAAC), serve as a signal peptide directing secretion. Residues 19–4050 (EKPLEETITP…IKRGDWGQQE (4032 aa)) lie on the Extracellular side of the membrane. Cadherin domains are found at residues 34–148 (THSL…KPLF) and 149–256 (SPPS…PPVI). Asn-39, Asn-210, Asn-280, and Asn-330 each carry an N-linked (GlcNAc...) asparagine glycan. 31 Cadherin domains span residues 363–458 (EKAV…APVF), 459–564 (NRSS…QPMF), 565–669 (EEVN…VPVQ), 716–820 (DHFP…PPRF), 821–925 (PPGG…PPQC), 926–1032 (ITEH…SPHF), 1033–1142 (SSFV…RPVF), 1138–1242 (SRPV…SPMF), 1243–1346 (SHKL…SSIP), 1350–1448 (DESH…RPQF), 1449–1555 (LQDH…SPHF), 1556–1660 (TQPR…APIF), 1661–1758 (SKDE…APAF), 1759–1872 (LKST…PPRF), 1873–1968 (SEQI…SLQF), 1969–2070 (DQDI…IPEF), 2071–2171 (QHLP…NPLF), 2172–2272 (QSPY…PPTF), 2273–2379 (SQLV…PPEF), 2380–2481 (REPQ…SPEF), 2482–2585 (QQNV…APQF), 2586–2692 (KASG…LPKF), 2693–2799 (SEPL…RPVF), 2800–2908 (EADP…PPRF), 2909–3013 (ASED…SPQC), 3014–3115 (SQLL…APRF), 3116–3220 (FPSH…LPIF), 3221–3323 (LNSE…HPRF), 3324–3428 (THDL…PPRF), 3429–3533 (FQLN…PPST), and 3534–3631 (LPLE…APQQ). N-linked (GlcNAc...) asparagine glycans are attached at residues Asn-459, Asn-568, Asn-627, and Asn-789. An N-linked (GlcNAc...) asparagine glycan is attached at Asn-996. Residues Asn-1175, Asn-1276, and Asn-1417 are each glycosylated (N-linked (GlcNAc...) asparagine). N-linked (GlcNAc...) asparagine glycosylation is found at Asn-1899, Asn-1998, Asn-2007, Asn-2102, Asn-2165, Asn-2183, Asn-2325, Asn-2368, Asn-2387, Asn-2430, Asn-2470, Asn-2547, and Asn-2597. Residues Asn-3127, Asn-3278, and Asn-3312 are each glycosylated (N-linked (GlcNAc...) asparagine). 8 N-linked (GlcNAc...) asparagine glycosylation sites follow: Asn-3432, Asn-3603, Asn-3770, Asn-3774, Asn-3815, Asn-3842, Asn-3875, and Asn-3906. A Laminin G-like domain is found at 3775 to 3946 (GTTWRFSGQS…YLETWALSQC (172 aa)). 4 disulfides stabilise this stretch: Cys-3914/Cys-3946, Cys-3953/Cys-3964, Cys-3958/Cys-3974, and Cys-3976/Cys-3985. 2 EGF-like domains span residues 3949 to 3986 (PGTTCSQNPCLNGGSCSPALGSGYLCRCPPLFSGRNCE) and 3988 to 4024 (GRENCTSAPCQEGGTCVSSPEGTSCSCPHPYTGDRCE). N-linked (GlcNAc...) asparagine glycosylation occurs at Asn-3991. Disulfide bonds link Cys-3992–Cys-4003, Cys-3997–Cys-4012, and Cys-4014–Cys-4023. A helical transmembrane segment spans residues 4051–4071 (FLVIIVALPLLIIATVGLLLY). Topologically, residues 4072–4351 (CRRCKSHKPV…DYGSCEEVMF (280 aa)) are cytoplasmic. The tract at residues 4313–4340 (DCEVNGGPAPGRSQPRAPPNYEGSDMVE) is disordered.

Homodimer.

The protein localises to the cell membrane. Its subcellular location is the cell junction. It localises to the golgi apparatus. The protein resides in the trans-Golgi network. Functionally, involved in the regulation of cell migration. May be involved in mediating the organization of the parallel fibers of granule cells during cerebellar development. In Mus musculus (Mouse), this protein is Protocadherin Fat 2 (Fat2).